Here is a 352-residue protein sequence, read N- to C-terminus: Proton-activated chloride channel (352 aa).

Positions Met-1 to Pro-55 are disordered. The Cytoplasmic segment spans residues Met-1–Asn-65. The segment covering Leu-15–Glu-38 has biased composition (acidic residues). Residues Phe-66–Val-86 form a helical membrane-spanning segment. Topologically, residues Tyr-87–Asp-299 are extracellular. A helical transmembrane segment spans residues Ile-300–Phe-320. Residues Lys-321–Ser-352 are Cytoplasmic-facing.

The protein belongs to the proton-activated chloride channel family.

It localises to the cell membrane. It carries out the reaction chloride(in) = chloride(out). Functionally, chloride channel gated by pH that facilitates the entry of chloride ions into cells upon exposure to extracellular acidic pH. The polypeptide is Proton-activated chloride channel (Xenopus tropicalis (Western clawed frog)).